The chain runs to 314 residues: Ribosomal RNA small subunit methyltransferase H (314 aa).

Residues 36–38 (GGH), aspartate 56, phenylalanine 82, aspartate 104, and glutamine 111 each bind S-adenosyl-L-methionine.

Belongs to the methyltransferase superfamily. RsmH family.

Its subcellular location is the cytoplasm. It catalyses the reaction cytidine(1402) in 16S rRNA + S-adenosyl-L-methionine = N(4)-methylcytidine(1402) in 16S rRNA + S-adenosyl-L-homocysteine + H(+). In terms of biological role, specifically methylates the N4 position of cytidine in position 1402 (C1402) of 16S rRNA. The chain is Ribosomal RNA small subunit methyltransferase H from Ectopseudomonas mendocina (strain ymp) (Pseudomonas mendocina).